Here is a 136-residue protein sequence, read N- to C-terminus: uncharacterized protein (136 aa).

The signal sequence occupies residues 1–19 (MKKLLMVILGIALIGMAYA).

This is an uncharacterized protein from Methanocaldococcus jannaschii (strain ATCC 43067 / DSM 2661 / JAL-1 / JCM 10045 / NBRC 100440) (Methanococcus jannaschii).